The primary structure comprises 414 residues: Protein PHLOEM PROTEIN 2-LIKE A10 (414 aa).

Transmembrane regions (helical) follow at residues 20 to 40 (WLIF…VYHL) and 379 to 399 (YVGA…LHII).

It is found in the membrane. The polypeptide is Protein PHLOEM PROTEIN 2-LIKE A10 (PP2A10) (Arabidopsis thaliana (Mouse-ear cress)).